The chain runs to 427 residues: 5'-deoxyadenosine deaminase (427 aa).

Residues His62 and His64 each contribute to the Zn(2+) site. Residues Glu91 and His183 each coordinate substrate. Zn(2+) is bound at residue His210. Substrate contacts are provided by Glu213 and Asp298. Asp298 contributes to the Zn(2+) binding site.

It belongs to the metallo-dependent hydrolases superfamily. MTA/SAH deaminase family. Homotetramer. Zn(2+) serves as cofactor.

The catalysed reaction is 5'-deoxyadenosine + H2O + H(+) = 5'-deoxyinosine + NH4(+). The enzyme catalyses S-adenosyl-L-homocysteine + H2O + H(+) = S-inosyl-L-homocysteine + NH4(+). It catalyses the reaction S-methyl-5'-thioadenosine + H2O + H(+) = S-methyl-5'-thioinosine + NH4(+). It carries out the reaction adenosine + H2O + H(+) = inosine + NH4(+). Its pathway is amino-acid biosynthesis; S-adenosyl-L-methionine biosynthesis. Functionally, catalyzes the deamination of three SAM-derived enzymatic products, namely 5'-deoxyadenosine, S-adenosyl-L-homocysteine, and 5'-methylthioadenosine, to produce the inosine analogs. Can also deaminate adenosine. The preferred substrate for this enzyme is 5'-deoxyadenosine, but all these substrates are efficiently deaminated. Likely functions in a S-adenosyl-L-methionine (SAM) recycling pathway from S-adenosyl-L-homocysteine (SAH) produced from SAM-dependent methylation reactions. May also be involved in the recycling of 5'-deoxyadenosine, whereupon the 5'-deoxyribose moiety of 5'-deoxyinosine is further metabolized to deoxyhexoses used for the biosynthesis of aromatic amino acids in methanogens. The protein is 5'-deoxyadenosine deaminase of Methanothermobacter thermautotrophicus (strain ATCC 29096 / DSM 1053 / JCM 10044 / NBRC 100330 / Delta H) (Methanobacterium thermoautotrophicum).